A 347-amino-acid chain; its full sequence is Selenide, water dikinase (347 aa).

Cys17 is an active-site residue. ATP contacts are provided by residues Lys20 and 48 to 50 (TRD). Mg(2+) is bound at residue Asp51. Residues Asp68, Asp91, and 139–141 (GHS) each bind ATP. Asp91 lines the Mg(2+) pocket. Position 227 (Asp227) interacts with Mg(2+).

The protein belongs to the selenophosphate synthase 1 family. Class I subfamily. As to quaternary structure, homodimer. The cofactor is Mg(2+).

The catalysed reaction is hydrogenselenide + ATP + H2O = selenophosphate + AMP + phosphate + 2 H(+). Synthesizes selenophosphate from selenide and ATP. The protein is Selenide, water dikinase of Escherichia coli O139:H28 (strain E24377A / ETEC).